The primary structure comprises 560 residues: Calnexin homolog (560 aa).

Residues M1–A22 form the signal peptide. Over D23–G489 the chain is Lumenal. A disulfide bridge links C132 with C163. Residues Y136, K138, Y154, and D161 each coordinate an alpha-D-glucoside. Positions I242–D375 are p domain (Extended arm). Tandem repeats lie at residues D244 to D255, D261 to E272, D280 to E291, D299 to D310, and G314 to P324. 2 4 X approximate repeats regions span residues D244 to D310 and G314 to P371. Positions W253–D273 are disordered. Residues C326 and C332 are joined by a disulfide bond. 3 tandem repeats follow at residues G333–P343, G347–P357, and G361–P371. E391 is a binding site for an alpha-D-glucoside. An N-linked (GlcNAc...) asparagine glycan is attached at N418. A helical transmembrane segment spans residues I490 to A512. The Cytoplasmic segment spans residues S513–D560. Positions A517–D560 are disordered. Residues E525–D544 are compositionally biased toward basic and acidic residues. A Phosphothreonine modification is found at T551. Phosphoserine is present on S553. T555 is modified (phosphothreonine).

Belongs to the calreticulin family.

Its subcellular location is the endoplasmic reticulum membrane. Calcium-binding protein that interacts with newly synthesized monoglucosylated glycoproteins in the endoplasmic reticulum. It may act in assisting protein assembly and/or in the retention within the ER of unassembled protein subunits. It seems to play a major role in the quality control apparatus of the ER by the retention of incorrectly folded proteins. The sequence is that of Calnexin homolog (cal1) from Schizosaccharomyces pombe (strain 972 / ATCC 24843) (Fission yeast).